A 400-amino-acid polypeptide reads, in one-letter code: Tektin-B1 (400 aa).

Coiled coils occupy residues 35–81 (TRLS…AKAL), 236–294 (FALR…LENR), and 310–353 (GLVN…LELK).

The protein belongs to the tektin family. May form a heterodimer with tektin a or exist as a homodimer. Cilia and flagella.

Its subcellular location is the cytoplasm. It is found in the cytoskeleton. Structural component of ciliary and flagellar microtubules. The chain is Tektin-B1 from Strongylocentrotus purpuratus (Purple sea urchin).